Reading from the N-terminus, the 118-residue chain is Alpha-amylase inhibitor 4 (118 aa).

4 disulfide bridges follow: Cys7–Cys60, Cys21–Cys49, Cys30–Cys82, and Cys50–Cys101.

It belongs to the protease inhibitor I6 (cereal trypsin/alpha-amylase inhibitor) family.

It is found in the secreted. Functionally, alpha-amylase inhibitor. This is Alpha-amylase inhibitor 4 from Sorghum bicolor (Sorghum).